We begin with the raw amino-acid sequence, 316 residues long: 4-diphosphocytidyl-2-C-methyl-D-erythritol kinase (316 aa).

Lys-23 is an active-site residue. 108-118 contributes to the ATP binding site; it reads PVAGGMAGGSA. Residue Asp-150 is part of the active site.

The protein belongs to the GHMP kinase family. IspE subfamily.

The catalysed reaction is 4-CDP-2-C-methyl-D-erythritol + ATP = 4-CDP-2-C-methyl-D-erythritol 2-phosphate + ADP + H(+). It functions in the pathway isoprenoid biosynthesis; isopentenyl diphosphate biosynthesis via DXP pathway; isopentenyl diphosphate from 1-deoxy-D-xylulose 5-phosphate: step 3/6. In terms of biological role, catalyzes the phosphorylation of the position 2 hydroxy group of 4-diphosphocytidyl-2C-methyl-D-erythritol. The chain is 4-diphosphocytidyl-2-C-methyl-D-erythritol kinase from Mycolicibacterium paratuberculosis (strain ATCC BAA-968 / K-10) (Mycobacterium paratuberculosis).